We begin with the raw amino-acid sequence, 172 residues long: Shikimate kinase (172 aa).

Residue 11-16 (GAGKST) coordinates ATP. Serine 15 provides a ligand contact to Mg(2+). 3 residues coordinate substrate: aspartate 33, arginine 57, and glycine 79. ATP is bound at residue arginine 117. Residue arginine 136 coordinates substrate. Position 153 (arginine 153) interacts with ATP.

The protein belongs to the shikimate kinase family. In terms of assembly, monomer. It depends on Mg(2+) as a cofactor.

The protein localises to the cytoplasm. The enzyme catalyses shikimate + ATP = 3-phosphoshikimate + ADP + H(+). The protein operates within metabolic intermediate biosynthesis; chorismate biosynthesis; chorismate from D-erythrose 4-phosphate and phosphoenolpyruvate: step 5/7. Functionally, catalyzes the specific phosphorylation of the 3-hydroxyl group of shikimic acid using ATP as a cosubstrate. The chain is Shikimate kinase from Pseudomonas syringae pv. tomato (strain ATCC BAA-871 / DC3000).